Reading from the N-terminus, the 319-residue chain is ATP-dependent 6-phosphofructokinase (319 aa).

Residues glycine 10, 71–72 (RS), and 101–104 (GDGS) each bind ATP. Aspartate 102 is a binding site for Mg(2+). A substrate-binding site is contributed by 125–127 (TID). Aspartate 127 serves as the catalytic Proton acceptor. Arginine 154 contacts ADP. Substrate is bound by residues arginine 162 and 169-171 (MGR). 185–187 (GAE) lines the ADP pocket. Substrate contacts are provided by residues glutamate 223, arginine 244, and 250-253 (HVQR).

The protein belongs to the phosphofructokinase type A (PFKA) family. ATP-dependent PFK group I subfamily. Prokaryotic clade 'B1' sub-subfamily. Homotetramer. It depends on Mg(2+) as a cofactor.

The protein resides in the cytoplasm. It carries out the reaction beta-D-fructose 6-phosphate + ATP = beta-D-fructose 1,6-bisphosphate + ADP + H(+). Its pathway is carbohydrate degradation; glycolysis; D-glyceraldehyde 3-phosphate and glycerone phosphate from D-glucose: step 3/4. With respect to regulation, allosterically activated by ADP and other diphosphonucleosides, and allosterically inhibited by phosphoenolpyruvate. In terms of biological role, catalyzes the phosphorylation of D-fructose 6-phosphate to fructose 1,6-bisphosphate by ATP, the first committing step of glycolysis. This chain is ATP-dependent 6-phosphofructokinase, found in Wolinella succinogenes (strain ATCC 29543 / DSM 1740 / CCUG 13145 / JCM 31913 / LMG 7466 / NCTC 11488 / FDC 602W) (Vibrio succinogenes).